Consider the following 201-residue polypeptide: 3-isopropylmalate dehydratase small subunit (201 aa).

The protein belongs to the LeuD family. LeuD type 1 subfamily. In terms of assembly, heterodimer of LeuC and LeuD.

It catalyses the reaction (2R,3S)-3-isopropylmalate = (2S)-2-isopropylmalate. It participates in amino-acid biosynthesis; L-leucine biosynthesis; L-leucine from 3-methyl-2-oxobutanoate: step 2/4. Functionally, catalyzes the isomerization between 2-isopropylmalate and 3-isopropylmalate, via the formation of 2-isopropylmaleate. The protein is 3-isopropylmalate dehydratase small subunit of Shewanella piezotolerans (strain WP3 / JCM 13877).